The sequence spans 385 residues: Glucans biosynthesis protein C (385 aa).

10 helical membrane passes run Ala17–Trp37, Met60–Leu80, Val91–Gln111, Ile137–Phe157, Lys173–Ile193, Phe212–Ile232, Arg245–Gln262, Thr274–Gly294, Ala311–Thr331, and Trp338–Ile358.

This sequence belongs to the acyltransferase 3 family. OpgC subfamily.

The protein localises to the cell membrane. It participates in glycan metabolism; osmoregulated periplasmic glucan (OPG) biosynthesis. Necessary for the succinyl substitution of periplasmic glucans. Could catalyze the transfer of succinyl residues from the cytoplasmic side of the membrane to the nascent glucan backbones on the periplasmic side of the membrane. The protein is Glucans biosynthesis protein C of Escherichia coli O81 (strain ED1a).